Reading from the N-terminus, the 125-residue chain is DNA-directed RNA polymerase subunit omega (125 aa).

It belongs to the RNA polymerase subunit omega family. The RNAP catalytic core consists of 2 alpha, 1 beta, 1 beta' and 1 omega subunit. When a sigma factor is associated with the core the holoenzyme is formed, which can initiate transcription.

It carries out the reaction RNA(n) + a ribonucleoside 5'-triphosphate = RNA(n+1) + diphosphate. Its function is as follows. Promotes RNA polymerase assembly. Latches the N- and C-terminal regions of the beta' subunit thereby facilitating its interaction with the beta and alpha subunits. This chain is DNA-directed RNA polymerase subunit omega, found in Zymomonas mobilis subsp. mobilis (strain ATCC 31821 / ZM4 / CP4).